Here is a 147-residue protein sequence, read N- to C-terminus: UPF0306 protein YhbP (147 aa).

It belongs to the UPF0306 family.

This Shigella sonnei (strain Ss046) protein is UPF0306 protein YhbP.